The sequence spans 143 residues: Putative pre-16S rRNA nuclease (143 aa).

Belongs to the YqgF nuclease family.

It is found in the cytoplasm. Could be a nuclease involved in processing of the 5'-end of pre-16S rRNA. This chain is Putative pre-16S rRNA nuclease, found in Leuconostoc citreum (strain KM20).